A 611-amino-acid polypeptide reads, in one-letter code: Muscarinic acetylcholine receptor gar-3 (611 aa).

The Extracellular segment spans residues 1–67 (MQSSSLGNAD…LLGEEGRMVM (67 aa)). Residues Asn28 and Asn33 are each glycosylated (N-linked (GlcNAc...) asparagine). The helical transmembrane segment at 68–88 (IVVIGAMFALVTSLGNLMVMV) threads the bilayer. Topologically, residues 89–101 (SFKIDKQLQTISN) are cytoplasmic. Residues 102–122 (YFLFSLAVADIAIGVISIPMF) form a helical membrane-spanning segment. The Extracellular segment spans residues 123–140 (TYYTAIQKWDLGYTMCQF). An intrachain disulfide couples Cys138 to Cys218. Residues 141 to 161 (WLCIDYLMSNASVLNLLLISF) traverse the membrane as a helical segment. Residues 162–181 (DRYFSVTRPLSYRPRRTTKK) are Cytoplasmic-facing. The chain crosses the membrane as a helical span at residues 182-202 (ALTMIACTYIISLILWPPWII). Residues 203–227 (SWPYIEGKFTAEPGTCVVQFLQTNP) lie on the Extracellular side of the membrane. A helical transmembrane segment spans residues 228 to 248 (YVTVGTAVAAFYLPVTIMCIL). Topologically, residues 249–525 (YTRVYWETQK…RKQESKAAKT (277 aa)) are cytoplasmic. Disordered stretches follow at residues 299 to 364 (RRSM…SSEA), 377 to 432 (SHFA…NNNS), 446 to 477 (SRPSVRLSSCEPYLDEPISTRNRSKSDCNSEI), and 500 to 519 (FSSQERKSEKEQRKNERKQE). Low complexity predominate over residues 307–317 (SSTSIIKSSGS). Positions 503 to 519 (QERKSEKEQRKNERKQE) are enriched in basic and acidic residues. Residues 526 to 546 (LSAILCAFIATWTPYNLIVCW) traverse the membrane as a helical segment. The Extracellular segment spans residues 547-557 (EAFFPNTVPNV). A helical membrane pass occupies residues 558 to 578 (LWTFSYFLCYINSTINPLCYA). Residues 579–611 (LCNARFRHTYMRILRCKFKAERPTMNQGYVRRN) are Cytoplasmic-facing.

Belongs to the G-protein coupled receptor 1 family. Muscarinic acetylcholine receptor subfamily.

The protein resides in the cell membrane. Functionally, the muscarinic acetylcholine receptor mediates various cellular responses, including inhibition of adenylate cyclase, breakdown of phosphoinositides and modulation of potassium channels through the action of G proteins. Primary transducing effect is Pi turnover. Enhances the release of the neurotransmitter acetlycholine in cholinergic motor neurons, which in turn positively feeds back to depolarize body wall muscles and allows for the maintenance of normal body posture and locomotion. The polypeptide is Muscarinic acetylcholine receptor gar-3 (gar-3) (Caenorhabditis elegans).